The chain runs to 642 residues: Zinc finger protein 14 (642 aa).

One can recognise a KRAB domain in the interval 4-76; sequence VSFEDVAVNF…MVERLCESRR (73 aa). The C2H2-type 1 zinc finger occupies 103 to 125; the sequence is HECSFCGRDFIHHSSLNRHMRSH. The C2H2-type 2; degenerate zinc-finger motif lies at 141 to 163; that stretch reads CKCKAVGKTFSYHHCFRKHERTH. The C2H2-type 3 zinc finger occupies 169–191; it reads YECKQCGKAFIYYQPFQRHERTH. The segment at 197-217 adopts a C2H2-type 4; atypical zinc-finger fold; sequence YECKQCGKTFIYYQSFQKHAH. C2H2-type zinc fingers lie at residues 223–245, 251–273, 279–301, 307–329, 335–357, 363–385, 391–413, 419–441, 447–469, 475–497, 503–525, 531–553, 559–581, 587–609, and 615–637; these read YECK…KRTH, YECK…ERTH, YKCK…KRTH, YECK…VIIH, YKCK…ERTH, YECK…ETTH, YECK…ERSH, YECK…EKIH, FECK…ERTH, YQCK…ERTH, and YRCK…ERSH.

This sequence belongs to the krueppel C2H2-type zinc-finger protein family.

Its subcellular location is the nucleus. Its function is as follows. May be involved in transcriptional regulation. In Homo sapiens (Human), this protein is Zinc finger protein 14 (ZNF14).